The sequence spans 120 residues: Putative iron-sulfur cluster insertion protein ErpA (120 aa).

Iron-sulfur cluster contacts are provided by C49, C113, and C115.

Belongs to the HesB/IscA family. Homodimer. Iron-sulfur cluster is required as a cofactor.

Functionally, required for insertion of 4Fe-4S clusters. The protein is Putative iron-sulfur cluster insertion protein ErpA of Albidiferax ferrireducens (strain ATCC BAA-621 / DSM 15236 / T118) (Rhodoferax ferrireducens).